The following is a 229-amino-acid chain: Mediator of RNA polymerase II transcription subunit 7 (229 aa).

This sequence belongs to the Mediator complex subunit 7 family. In terms of assembly, component of the Mediator complex.

Its subcellular location is the nucleus. Its function is as follows. Component of the Mediator complex, a coactivator involved in the regulated transcription of nearly all RNA polymerase II-dependent genes. Mediator functions as a bridge to convey information from gene-specific regulatory proteins to the basal RNA polymerase II transcription machinery. Mediator is recruited to promoters by direct interactions with regulatory proteins and serves as a scaffold for the assembly of a functional preinitiation complex with RNA polymerase II and the general transcription factors. This Xenopus tropicalis (Western clawed frog) protein is Mediator of RNA polymerase II transcription subunit 7 (med7).